A 557-amino-acid chain; its full sequence is NAD(P)H-quinone oxidoreductase chain 4 (557 aa).

14 consecutive transmembrane segments (helical) span residues 25–45 (FPWLSLSILFPIAGSLLVPFI), 57–77 (YALFIALTTFLITVGAYLKGF), 111–131 (LILLTSFITALAVLAAWPVSF), 133–153 (PKLFFFLILAMDGGQIAVFAV), 157–177 (LLFFLAWELELLPVYLLLAIW), 189–209 (FIIYTAGSSLFILLAGLAMGF), 230–250 (GFQLLCYGGLLIAFGVKLPIV), 264–284 (TAPVHMLLAGILLKMGGYALL), 298–318 (FAPLLIVLGVVNIIYAALTSF), 327–347 (IAYSSISHMGFVLIGIGSFST), 353–373 (AMLQMISHGLIGASLFFLVGA), 397–417 (FALWTVCSLASLALPGMSGFV), 438–458 (IVIAGLAAIGVILTPIYLLSM), and 485–505 (IYIIGSLLVPIIGIGLYPRIM).

This sequence belongs to the complex I subunit 4 family.

It localises to the cellular thylakoid membrane. The enzyme catalyses a plastoquinone + NADH + (n+1) H(+)(in) = a plastoquinol + NAD(+) + n H(+)(out). It carries out the reaction a plastoquinone + NADPH + (n+1) H(+)(in) = a plastoquinol + NADP(+) + n H(+)(out). In terms of biological role, NDH-1 shuttles electrons from NAD(P)H, via FMN and iron-sulfur (Fe-S) centers, to quinones in the respiratory chain. The immediate electron acceptor for the enzyme in this species is believed to be plastoquinone. Couples the redox reaction to proton translocation (for every two electrons transferred, four hydrogen ions are translocated across the cytoplasmic membrane), and thus conserves the redox energy in a proton gradient. In Prochlorococcus marinus (strain SARG / CCMP1375 / SS120), this protein is NAD(P)H-quinone oxidoreductase chain 4.